Here is a 510-residue protein sequence, read N- to C-terminus: NAD(P)H-quinone oxidoreductase subunit 2 A, chloroplastic (510 aa).

13 helical membrane-spanning segments follow: residues 24 to 44, 57 to 77, 99 to 119, 124 to 144, 149 to 169, 183 to 203, 227 to 247, 295 to 315, 323 to 343, 354 to 374, 395 to 415, 418 to 438, and 484 to 504; these read LLLF…GLIL, IPWL…ALLF, IFQF…VEYI, MAIT…MFLC, LITI…LSGY, YLLM…WLYG, PGIS…LSPA, WHLL…LIAI, MLAY…IVGD, YMLF…LFGL, ALSL…AGFF, LYLF…IGLL, and MIVC…IIAI.

Belongs to the complex I subunit 2 family. NDH is composed of at least 16 different subunits, 5 of which are encoded in the nucleus.

It is found in the plastid. It localises to the chloroplast thylakoid membrane. It carries out the reaction a plastoquinone + NADH + (n+1) H(+)(in) = a plastoquinol + NAD(+) + n H(+)(out). It catalyses the reaction a plastoquinone + NADPH + (n+1) H(+)(in) = a plastoquinol + NADP(+) + n H(+)(out). Functionally, NDH shuttles electrons from NAD(P)H:plastoquinone, via FMN and iron-sulfur (Fe-S) centers, to quinones in the photosynthetic chain and possibly in a chloroplast respiratory chain. The immediate electron acceptor for the enzyme in this species is believed to be plastoquinone. Couples the redox reaction to proton translocation, and thus conserves the redox energy in a proton gradient. The sequence is that of NAD(P)H-quinone oxidoreductase subunit 2 A, chloroplastic from Solanum lycopersicum (Tomato).